The following is a 200-amino-acid chain: dITP/XTP pyrophosphatase (200 aa).

5–10 (TRNEGK) serves as a coordination point for substrate. Catalysis depends on Asp67, which acts as the Proton acceptor. Residue Asp67 participates in Mg(2+) binding. Substrate contacts are provided by residues Ser68, 151 to 154 (FGYD), Lys174, and 179 to 180 (HR).

The protein belongs to the HAM1 NTPase family. In terms of assembly, homodimer. Requires Mg(2+) as cofactor.

It carries out the reaction XTP + H2O = XMP + diphosphate + H(+). It catalyses the reaction dITP + H2O = dIMP + diphosphate + H(+). The catalysed reaction is ITP + H2O = IMP + diphosphate + H(+). Pyrophosphatase that catalyzes the hydrolysis of nucleoside triphosphates to their monophosphate derivatives, with a high preference for the non-canonical purine nucleotides XTP (xanthosine triphosphate), dITP (deoxyinosine triphosphate) and ITP. Seems to function as a house-cleaning enzyme that removes non-canonical purine nucleotides from the nucleotide pool, thus preventing their incorporation into DNA/RNA and avoiding chromosomal lesions. This Streptococcus pneumoniae serotype 4 (strain ATCC BAA-334 / TIGR4) protein is dITP/XTP pyrophosphatase.